A 247-amino-acid chain; its full sequence is DNA polymerase sliding clamp (247 aa).

The protein belongs to the PCNA family. Homotrimer. The subunits circularize to form a toroid; DNA passes through its center. Replication factor C (RFC) is required to load the toroid on the DNA.

In terms of biological role, sliding clamp subunit that acts as a moving platform for DNA processing. Responsible for tethering the catalytic subunit of DNA polymerase and other proteins to DNA during high-speed replication. The protein is DNA polymerase sliding clamp of Methanoregula boonei (strain DSM 21154 / JCM 14090 / 6A8).